A 365-amino-acid chain; its full sequence is tRNA-specific 2-thiouridylase MnmA (365 aa).

Residues 14 to 21 (AMSGGVDS) and Leu-40 each bind ATP. Cys-108 serves as the catalytic Nucleophile. Cysteines 108 and 204 form a disulfide. Gly-132 provides a ligand contact to ATP. An interaction with tRNA region spans residues 154 to 156 (KDQ). Cys-204 acts as the Cysteine persulfide intermediate in catalysis.

Belongs to the MnmA/TRMU family.

It localises to the cytoplasm. It catalyses the reaction S-sulfanyl-L-cysteinyl-[protein] + uridine(34) in tRNA + AH2 + ATP = 2-thiouridine(34) in tRNA + L-cysteinyl-[protein] + A + AMP + diphosphate + H(+). Functionally, catalyzes the 2-thiolation of uridine at the wobble position (U34) of tRNA, leading to the formation of s(2)U34. The protein is tRNA-specific 2-thiouridylase MnmA of Rickettsia rickettsii (strain Iowa).